A 343-amino-acid chain; its full sequence is Ribosomal RNA small subunit methyltransferase C (343 aa).

Belongs to the methyltransferase superfamily. RsmC family. Monomer.

It localises to the cytoplasm. It catalyses the reaction guanosine(1207) in 16S rRNA + S-adenosyl-L-methionine = N(2)-methylguanosine(1207) in 16S rRNA + S-adenosyl-L-homocysteine + H(+). In terms of biological role, specifically methylates the guanine in position 1207 of 16S rRNA in the 30S particle. In Shigella sonnei (strain Ss046), this protein is Ribosomal RNA small subunit methyltransferase C.